A 194-amino-acid polypeptide reads, in one-letter code: Adenylate kinase isoenzyme 1 (194 aa).

Methionine 1 carries the post-translational modification N-acetylmethionine. 18-23 (GSGKGT) provides a ligand contact to ATP. A Phosphoserine modification is found at serine 38. Positions 38 to 67 (STGDLLRAEVSSGSARGKKLSEIMEKGQLV) are NMP. AMP contacts are provided by residues threonine 39, arginine 44, 65–67 (QLV), 94–97 (GYPR), and glutamine 101. The LID stretch occupies residues 131–141 (KRGETSGRVDD). Residue arginine 132 coordinates ATP. Residues arginine 138 and arginine 149 each contribute to the AMP site. Glycine 177 contributes to the ATP binding site.

This sequence belongs to the adenylate kinase family. AK1 subfamily. As to quaternary structure, monomer. The cofactor is Mg(2+).

Its subcellular location is the cytoplasm. The catalysed reaction is a ribonucleoside 5'-phosphate + ATP = a ribonucleoside 5'-diphosphate + ADP. The enzyme catalyses AMP + ATP = 2 ADP. It carries out the reaction dAMP + ATP = dADP + ADP. It catalyses the reaction dATP + AMP = dADP + ADP. The catalysed reaction is dAMP + dATP = 2 dADP. The enzyme catalyses a 2'-deoxyribonucleoside 5'-diphosphate + ATP = a 2'-deoxyribonucleoside 5'-triphosphate + ADP. It carries out the reaction a ribonucleoside 5'-diphosphate + ATP = a ribonucleoside 5'-triphosphate + ADP. It catalyses the reaction CDP + GTP = CTP + GDP. The catalysed reaction is GDP + ATP = GTP + ADP. The enzyme catalyses UDP + ATP = UTP + ADP. It carries out the reaction GTP + UDP = UTP + GDP. It catalyses the reaction dTDP + GTP = dTTP + GDP. The catalysed reaction is dCDP + GTP = dCTP + GDP. The enzyme catalyses dGDP + ATP = dGTP + ADP. It carries out the reaction dADP + GTP = dATP + GDP. It catalyses the reaction thiamine diphosphate + ADP = thiamine triphosphate + AMP. In terms of biological role, catalyzes the reversible transfer of the terminal phosphate group between ATP and AMP. Also displays broad nucleoside diphosphate kinase activity. Plays an important role in cellular energy homeostasis and in adenine nucleotide metabolism. Also catalyzes at a very low rate the synthesis of thiamine triphosphate (ThTP) from thiamine diphosphate (ThDP) and ADP. This chain is Adenylate kinase isoenzyme 1, found in Oryctolagus cuniculus (Rabbit).